Reading from the N-terminus, the 457-residue chain is Serine--tRNA ligase (457 aa).

252-254 (TAE) lines the L-serine pocket. ATP-binding positions include 283-285 (RKE) and Val-299. Glu-306 is an L-serine binding site. 370–373 (EMVS) provides a ligand contact to ATP. Thr-406 provides a ligand contact to L-serine.

This sequence belongs to the class-II aminoacyl-tRNA synthetase family. Type-1 seryl-tRNA synthetase subfamily. Homodimer. The tRNA molecule binds across the dimer.

The protein localises to the cytoplasm. It carries out the reaction tRNA(Ser) + L-serine + ATP = L-seryl-tRNA(Ser) + AMP + diphosphate + H(+). The enzyme catalyses tRNA(Sec) + L-serine + ATP = L-seryl-tRNA(Sec) + AMP + diphosphate + H(+). The protein operates within aminoacyl-tRNA biosynthesis; selenocysteinyl-tRNA(Sec) biosynthesis; L-seryl-tRNA(Sec) from L-serine and tRNA(Sec): step 1/1. In terms of biological role, catalyzes the attachment of serine to tRNA(Ser). Is also able to aminoacylate tRNA(Sec) with serine, to form the misacylated tRNA L-seryl-tRNA(Sec), which will be further converted into selenocysteinyl-tRNA(Sec). In Saccharolobus islandicus (strain M.14.25 / Kamchatka #1) (Sulfolobus islandicus), this protein is Serine--tRNA ligase.